Consider the following 463-residue polypeptide: NADH dehydrogenase [ubiquinone] iron-sulfur protein 2, mitochondrial (463 aa).

The N-terminal 33 residues, 1–33 (MAALRALCRLRGAAAQVLRPGAGVRLPIQPSRG), are a transit peptide targeting the mitochondrion. Lys-62 carries the post-translational modification N6-acetyllysine. The residue at position 118 (Arg-118) is a Symmetric dimethylarginine. Cys-326, Cys-332, and Cys-347 together coordinate [4Fe-4S] cluster.

The protein belongs to the complex I 49 kDa subunit family. As to quaternary structure, core subunit of respiratory chain NADH dehydrogenase (Complex I) which is composed of 45 different subunits. Component of the iron-sulfur (IP) fragment of the enzyme. Interacts with NDUFAF3. Interacts with NDUFAF7. Interacts with CERS2. It depends on [4Fe-4S] cluster as a cofactor. Post-translationally, dimethylation at Arg-118 by NDUFAF7 takes place after NDUFS2 assembles into the complex I, leading to stabilize the early intermediate complex.

The protein resides in the mitochondrion inner membrane. The enzyme catalyses a ubiquinone + NADH + 5 H(+)(in) = a ubiquinol + NAD(+) + 4 H(+)(out). Functionally, core subunit of the mitochondrial membrane respiratory chain NADH dehydrogenase (Complex I) which catalyzes electron transfer from NADH through the respiratory chain, using ubiquinone as an electron acceptor. Essential for the catalytic activity and assembly of complex I. Redox-sensitive, critical component of the oxygen-sensing pathway in the pulmonary vasculature which plays a key role in acute pulmonary oxygen-sensing and hypoxic pulmonary vasoconstriction. Plays an important role in carotid body sensing of hypoxia. Essential for glia-like neural stem and progenitor cell proliferation, differentiation and subsequent oligodendrocyte or neuronal maturation. This Bos taurus (Bovine) protein is NADH dehydrogenase [ubiquinone] iron-sulfur protein 2, mitochondrial (NDUFS2).